The chain runs to 72 residues: Protein kish-A (72 aa).

The first 26 residues, 1 to 26 (MSAIFNFQSLLTVILLLICTCAYIRS), serve as a signal peptide directing secretion. Residues 27–53 (LTPSLLDKNKTGFLGIFWKCARIGERK) lie on the Extracellular side of the membrane. Asparagine 35 is a glycosylation site (N-linked (GlcNAc...) asparagine). A helical transmembrane segment spans residues 54-71 (SPYVAFCCIVMALTILFS). A topological domain (cytoplasmic) is located at residue glutamate 72.

It belongs to the KISH family.

It is found in the golgi apparatus membrane. Functionally, involved in the early part of the secretory pathway. The polypeptide is Protein kish-A (tmem167a) (Danio rerio (Zebrafish)).